We begin with the raw amino-acid sequence, 720 residues long: ATP-dependent DNA helicase Hel308 (720 aa).

Residues Ser-23, Gln-28, and 46-53 contribute to the ATP site; that span reads IPTASGKT. Positions 33-197 constitute a Helicase ATP-binding domain; sequence KSGILEGKNA…WLNAELIVSD (165 aa). The DEAH box signature appears at 145–148; sequence DEIH. Positions 229-422 constitute a Helicase C-terminal domain; the sequence is LVYDAIRKKK…NLRSQVLALI (194 aa).

The protein belongs to the helicase family. Hel308 subfamily. As to quaternary structure, monomer. Interacts with PCNA. Mg(2+) serves as cofactor. The cofactor is Zn(2+).

It carries out the reaction Couples ATP hydrolysis with the unwinding of duplex DNA by translocating in the 3'-5' direction.. The enzyme catalyses ATP + H2O = ADP + phosphate + H(+). Functionally, DNA-dependent ATPase and 3'-5' DNA helicase that may be involved in repair of stalled replication forks. Unwinds the lagging strand from forked DNA structures in a 3'-5' direction. PCNA, the DNA polymerase sliding clamp subunit, stimulates the helicase activity, and may alter substrate specificity. Unwinds branched DNA (Holliday junctions) in an ATP-dependent fashion; ss- and dsDNA stimulate ATPase to the greatest extent, although it preferentially binds DNA with a single-stranded region. Processes a RecA-mediated recombination intermediate between gapped circular and homologous linear dsDNA. The sequence is that of ATP-dependent DNA helicase Hel308 from Pyrococcus furiosus (strain ATCC 43587 / DSM 3638 / JCM 8422 / Vc1).